A 206-amino-acid polypeptide reads, in one-letter code: MSNVRSKICGITRIEDALAAAEAGADAIGFVFYAKSPRAVDVRQARAIIAELPPFVTTVGLFVNASRCELNEILEVVPLDLLQFHGDETPQDCEGYHRPWIKALRVRPGDDLEAACRLYAGARGILLDTYVPGVPGGTGEAFDWSLVPARLGKPIILAGGLSADNVGQAIAQVKPYAVDVSGGVEQAKGIKDAAKIEAFMRAVKQA.

Belongs to the TrpF family.

It carries out the reaction N-(5-phospho-beta-D-ribosyl)anthranilate = 1-(2-carboxyphenylamino)-1-deoxy-D-ribulose 5-phosphate. The protein operates within amino-acid biosynthesis; L-tryptophan biosynthesis; L-tryptophan from chorismate: step 3/5. The sequence is that of N-(5'-phosphoribosyl)anthranilate isomerase from Pseudomonas putida (strain ATCC 47054 / DSM 6125 / CFBP 8728 / NCIMB 11950 / KT2440).